A 365-amino-acid chain; its full sequence is Aminomethyltransferase (365 aa).

The protein belongs to the GcvT family. In terms of assembly, the glycine cleavage system is composed of four proteins: P, T, L and H.

It catalyses the reaction N(6)-[(R)-S(8)-aminomethyldihydrolipoyl]-L-lysyl-[protein] + (6S)-5,6,7,8-tetrahydrofolate = N(6)-[(R)-dihydrolipoyl]-L-lysyl-[protein] + (6R)-5,10-methylene-5,6,7,8-tetrahydrofolate + NH4(+). Functionally, the glycine cleavage system catalyzes the degradation of glycine. This Aeromonas salmonicida (strain A449) protein is Aminomethyltransferase.